Here is a 376-residue protein sequence, read N- to C-terminus: Heterodimeric geranylgeranyl pyrophosphate synthase large subunit 2 (376 aa).

The N-terminal stretch at 1–24 (MEPQILFLYLSLFILSLNFFFTNL) is a signal peptide. Lysine 125, arginine 128, and histidine 157 together coordinate isopentenyl diphosphate. Residues aspartate 164 and aspartate 170 each coordinate Mg(2+). Arginine 175 is a binding site for dimethylallyl diphosphate. Arginine 176 is an isopentenyl diphosphate binding site. 5 residues coordinate dimethylallyl diphosphate: lysine 261, threonine 262, glutamine 299, lysine 316, and lysine 326.

This sequence belongs to the FPP/GGPP synthase family. In terms of assembly, monomer. Part of a heterodimeric geranyl(geranyl)diphosphate synthase. Interacts with GGR. Mg(2+) serves as cofactor. In terms of tissue distribution, mainly expressed in flowers.

The protein resides in the endoplasmic reticulum. The catalysed reaction is isopentenyl diphosphate + dimethylallyl diphosphate = (2E)-geranyl diphosphate + diphosphate. It carries out the reaction isopentenyl diphosphate + (2E)-geranyl diphosphate = (2E,6E)-farnesyl diphosphate + diphosphate. It catalyses the reaction isopentenyl diphosphate + (2E,6E)-farnesyl diphosphate = (2E,6E,10E)-geranylgeranyl diphosphate + diphosphate. Its pathway is isoprenoid biosynthesis; farnesyl diphosphate biosynthesis; farnesyl diphosphate from geranyl diphosphate and isopentenyl diphosphate: step 1/1. It participates in isoprenoid biosynthesis; geranyl diphosphate biosynthesis; geranyl diphosphate from dimethylallyl diphosphate and isopentenyl diphosphate: step 1/1. The protein operates within isoprenoid biosynthesis; geranylgeranyl diphosphate biosynthesis; geranylgeranyl diphosphate from farnesyl diphosphate and isopentenyl diphosphate: step 1/1. In terms of biological role, heterodimeric geranyl(geranyl)-diphosphate (GPP) synthase large subunit. In vitro, the large subunit catalyzes mainly the trans-addition of the three molecules of IPP onto DMAPP to form geranylgeranyl pyrophosphate while the small subunit alone is inactive. Upon association of the two subunits, the product profile is not changed. The protein is Heterodimeric geranylgeranyl pyrophosphate synthase large subunit 2 (GGPPS2) of Arabidopsis thaliana (Mouse-ear cress).